The chain runs to 273 residues: MAIHLYKTSTPSTRNGAVDSQVKSNPRNNLIYGQHHCGKGRNARGIITAGHRGGGHKRLYRKIDFRRNEKDISGRIVTIEYDPNRNAYICLIHYGDGEKRYILHPRGAIIGDTIVSGTEVPISMGNALPLTDMPLGTAIHNIEITLGKGGQLARAAGAVAKLIAKEGKSATLRLPSGEVRLIYKNCLATVGQVGNVGVNQKNLGRAGSKCWLGKRPVVRGVAMNPVDHPHGGGEGRAPIGRKKPTTPWGYPALGRRSRKRNKYSDIYILRRRK.

Disordered regions lie at residues 1–22 and 223–254; these read MAIH…DSQV and MNPV…PALG.

The protein belongs to the universal ribosomal protein uL2 family. Part of the 50S ribosomal subunit.

It localises to the plastid. The protein localises to the chloroplast. The protein is Large ribosomal subunit protein uL2cz/uL2cy (rpl2-A) of Drimys granadensis.